The chain runs to 215 residues: Orotate phosphoribosyltransferase (215 aa).

Lysine 25 is a 5-phospho-alpha-D-ribose 1-diphosphate binding site. 33–34 (FF) contributes to the orotate binding site. 5-phospho-alpha-D-ribose 1-diphosphate-binding positions include 71 to 72 (YK), arginine 98, lysine 99, lysine 102, histidine 104, and 124 to 132 (DDVITAGTA). Orotate-binding residues include threonine 128 and arginine 156.

It belongs to the purine/pyrimidine phosphoribosyltransferase family. PyrE subfamily. Homodimer.

The enzyme catalyses orotidine 5'-phosphate + diphosphate = orotate + 5-phospho-alpha-D-ribose 1-diphosphate. Its pathway is pyrimidine metabolism; UMP biosynthesis via de novo pathway; UMP from orotate: step 1/2. Its function is as follows. Catalyzes the transfer of a ribosyl phosphate group from 5-phosphoribose 1-diphosphate to orotate, leading to the formation of orotidine monophosphate (OMP). The sequence is that of Orotate phosphoribosyltransferase (ura5) from Schizosaccharomyces pombe (strain 972 / ATCC 24843) (Fission yeast).